Reading from the N-terminus, the 231-residue chain is Small ribosomal subunit protein uS3 (231 aa).

In terms of domain architecture, KH type-2 spans 39–107 (IRKFIMKTLP…GVSLNIVEIR (69 aa)).

It belongs to the universal ribosomal protein uS3 family. In terms of assembly, part of the 30S ribosomal subunit. Forms a tight complex with proteins S10 and S14.

Functionally, binds the lower part of the 30S subunit head. Binds mRNA in the 70S ribosome, positioning it for translation. This is Small ribosomal subunit protein uS3 from Zymomonas mobilis subsp. mobilis (strain ATCC 31821 / ZM4 / CP4).